The following is a 787-amino-acid chain: Protein FAM149A (787 aa).

Disordered stretches follow at residues 22–105, 144–175, 189–226, 238–284, 432–455, 573–602, and 665–697; these read SPAV…SSGA, GSNS…APGP, EEWT…PTNF, ASES…SWRD, DGDE…GLPP, LQQR…ASSR, and AVQT…SYRG. Positions 37–46 are enriched in polar residues; the sequence is SVDSGASTSL. 2 stretches are compositionally biased toward low complexity: residues 51–65 and 96–105; these read TLTL…TAAS and SGSLPSSSGA. Residues 144 to 155 show a composition bias toward polar residues; sequence GSNSVTASSPRN. Residues 189–200 show a composition bias toward acidic residues; it reads EEWTSDSDSQDD. Over residues 201-220 the composition is skewed to basic and acidic residues; sequence PEGRGLSEGLRKQSSEKSKD. A compositionally biased stretch (low complexity) spans 239-250; that stretch reads SESPSSFSSSGS. Over residues 251–261 the composition is skewed to polar residues; it reads RTPTEAHNSWP. Residues 262 to 274 are compositionally biased toward low complexity; the sequence is GSSTQSSTTGLST.

The protein belongs to the FAM149 family.

In Mus musculus (Mouse), this protein is Protein FAM149A (Fam149a).